Consider the following 262-residue polypeptide: Pyridoxine 5'-phosphate synthase (262 aa).

Residue asparagine 6 participates in 3-amino-2-oxopropyl phosphate binding. Aspartate 8–histidine 9 lines the 1-deoxy-D-xylulose 5-phosphate pocket. Arginine 17 is a binding site for 3-amino-2-oxopropyl phosphate. Histidine 43 acts as the Proton acceptor in catalysis. The 1-deoxy-D-xylulose 5-phosphate site is built by arginine 45 and histidine 50. The active-site Proton acceptor is the glutamate 70. Position 102 (threonine 102) interacts with 1-deoxy-D-xylulose 5-phosphate. Histidine 215 functions as the Proton donor in the catalytic mechanism. 3-amino-2-oxopropyl phosphate is bound by residues glycine 216 and glycine 237–histidine 238.

The protein belongs to the PNP synthase family. In terms of assembly, homooctamer; tetramer of dimers.

The protein localises to the cytoplasm. It carries out the reaction 3-amino-2-oxopropyl phosphate + 1-deoxy-D-xylulose 5-phosphate = pyridoxine 5'-phosphate + phosphate + 2 H2O + H(+). It participates in cofactor biosynthesis; pyridoxine 5'-phosphate biosynthesis; pyridoxine 5'-phosphate from D-erythrose 4-phosphate: step 5/5. Its function is as follows. Catalyzes the complicated ring closure reaction between the two acyclic compounds 1-deoxy-D-xylulose-5-phosphate (DXP) and 3-amino-2-oxopropyl phosphate (1-amino-acetone-3-phosphate or AAP) to form pyridoxine 5'-phosphate (PNP) and inorganic phosphate. This is Pyridoxine 5'-phosphate synthase from Helicobacter acinonychis (strain Sheeba).